The chain runs to 672 residues: UvrABC system protein B (672 aa).

Positions 26 to 181 (AGLEDGLAYQ…ILQRLAELQY (156 aa)) constitute a Helicase ATP-binding domain. An ATP-binding site is contributed by 39–46 (GVTGSGKT). A Beta-hairpin motif is present at residues 92–115 (YYDYYQPEAYVPSSDTYIEKDASI). The region spanning 430–592 (QVDDLLSEIK…ITPKSIQKAV (163 aa)) is the Helicase C-terminal domain. The UVR domain maps to 631–666 (AKELRKLEEQMYHHARNLEFEEAAAVRDKIQHIRKG).

It belongs to the UvrB family. Forms a heterotetramer with UvrA during the search for lesions. Interacts with UvrC in an incision complex.

The protein resides in the cytoplasm. Its function is as follows. The UvrABC repair system catalyzes the recognition and processing of DNA lesions. A damage recognition complex composed of 2 UvrA and 2 UvrB subunits scans DNA for abnormalities. Upon binding of the UvrA(2)B(2) complex to a putative damaged site, the DNA wraps around one UvrB monomer. DNA wrap is dependent on ATP binding by UvrB and probably causes local melting of the DNA helix, facilitating insertion of UvrB beta-hairpin between the DNA strands. Then UvrB probes one DNA strand for the presence of a lesion. If a lesion is found the UvrA subunits dissociate and the UvrB-DNA preincision complex is formed. This complex is subsequently bound by UvrC and the second UvrB is released. If no lesion is found, the DNA wraps around the other UvrB subunit that will check the other stand for damage. This chain is UvrABC system protein B, found in Coxiella burnetii (strain Dugway 5J108-111).